A 153-amino-acid polypeptide reads, in one-letter code: Cofilin (153 aa).

Residues serine 4–serine 148 enclose the ADF-H domain.

This sequence belongs to the actin-binding proteins ADF family.

The protein resides in the cytoplasm. Its subcellular location is the cytoskeleton. It is found in the nucleus matrix. Controls reversibly actin polymerization and depolymerization in a pH-sensitive manner. It has the ability to bind G- and F-actin in a 1:1 ratio of cofilin to actin. Binding to F-actin is regulated by tropomyosin. It is the major component of intranuclear and cytoplasmic actin rods. Required for accumulation of actin at the cell division site via depolymerizing actin at the cell ends. In association with myosin II has a role in the assembly of the contractile ring via severing actin filaments. Involved in the maintenance of the contractile ring once formed. In association with profilin and capping protein, has a role in the mitotic reorganization of the actin cytoskeleton. The protein is Cofilin (COF1) of Gibberella zeae (strain ATCC MYA-4620 / CBS 123657 / FGSC 9075 / NRRL 31084 / PH-1) (Wheat head blight fungus).